The following is a 272-amino-acid chain: tRNA pseudouridine synthase A (272 aa).

Asp-52 serves as the catalytic Nucleophile. Substrate is bound at residue Tyr-110.

This sequence belongs to the tRNA pseudouridine synthase TruA family. Homodimer.

The catalysed reaction is uridine(38/39/40) in tRNA = pseudouridine(38/39/40) in tRNA. Its function is as follows. Formation of pseudouridine at positions 38, 39 and 40 in the anticodon stem and loop of transfer RNAs. The sequence is that of tRNA pseudouridine synthase A from Cupriavidus taiwanensis (strain DSM 17343 / BCRC 17206 / CCUG 44338 / CIP 107171 / LMG 19424 / R1) (Ralstonia taiwanensis (strain LMG 19424)).